A 691-amino-acid polypeptide reads, in one-letter code: MFCRKFKDLKITGECPFSLLAPGQVPKEPTEEVAGGSEGCQATLPICQYFPEKNAEGSLPQRKTSRNRVYLHTLAESICKLIFPECERLNLALQRTLAKHKIEENRKSSEKEDLEKIIAEEAIAAGAPVEALKDSLGEELFKICYEEDEHILGVVGGTLKDFLNSFSTLLKQSSHCQEAERRGRLEDASILCLDKDQDFLNVYYFFPKRTTALLLPGIIKAAARILYESHVEVSLMPPCFRSDCTEFVNQPYLLYSVHVKSTKPSLSPGKPQSSLVIPASLFCKTFPFHFMLDRDLAILQLGNGIRRLVNKRDFQGKPNFEEFFEILTPKINQTFSGIMTMLNMQFVIRVRRWDNSVKKSSRVMDLKGQMIYIVESSAILFLGSPCVDRLEDFTGRGLYLSDIPIHNALRDVVLIGEQARAQDGLKKRLGKLKATLEHAHQALEEEKKRTVDLLCSIFPSEVAQQLWQGQIVQAKKFSEVTMLFSDIVGFTAICSQCSPLQVITMLNALYTRFDQQCGELDVYKVETIGDAYCVAGGLHRESDTHAVQIALMALKMMELSNEVMSPHGEPIKMRIGLHSGSVFAGVVGVKMPRYCLFGNNVTLANKFESCSVPRKINVSPTTYRLLKDCPGFVFTPRSREELPPNFPSDIPGICHFLDAYHHQGPNSKPWFQDKDVEDGNANFLGKASGID.

At serine 267 the chain carries Phosphoserine. A Guanylate cyclase domain is found at valine 480–phenylalanine 607.

This sequence belongs to the adenylyl cyclase class-4/guanylyl cyclase family. As to quaternary structure, the active enzyme is formed by a heterodimer of an alpha and a beta subunit. Heterodimer with GUCY1B1. Requires Mg(2+) as cofactor. The cofactor is Mn(2+).

Its subcellular location is the cytoplasm. It carries out the reaction GTP = 3',5'-cyclic GMP + diphosphate. With respect to regulation, activated by nitric oxide in the presence of magnesium or manganese ions. The sequence is that of Guanylate cyclase soluble subunit alpha-1 (Gucy1a1) from Mus musculus (Mouse).